The chain runs to 333 residues: Tetraacyldisaccharide 4'-kinase (333 aa).

60–67 serves as a coordination point for ATP; that stretch reads TVGGTGKT.

Belongs to the LpxK family.

The enzyme catalyses a lipid A disaccharide + ATP = a lipid IVA + ADP + H(+). It participates in glycolipid biosynthesis; lipid IV(A) biosynthesis; lipid IV(A) from (3R)-3-hydroxytetradecanoyl-[acyl-carrier-protein] and UDP-N-acetyl-alpha-D-glucosamine: step 6/6. Transfers the gamma-phosphate of ATP to the 4'-position of a tetraacyldisaccharide 1-phosphate intermediate (termed DS-1-P) to form tetraacyldisaccharide 1,4'-bis-phosphate (lipid IVA). The chain is Tetraacyldisaccharide 4'-kinase from Pseudomonas putida (strain ATCC 700007 / DSM 6899 / JCM 31910 / BCRC 17059 / LMG 24140 / F1).